The primary structure comprises 237 residues: Uridylate kinase (237 aa).

ATP is bound at residue 11-14 (KLSG). A UMP-binding site is contributed by glycine 53. 2 residues coordinate ATP: glycine 54 and arginine 58. Residues aspartate 73 and 134 to 141 (TGNPFFTT) contribute to the UMP site. ATP-binding residues include threonine 161, tyrosine 167, and aspartate 170.

The protein belongs to the UMP kinase family. Homohexamer.

The protein localises to the cytoplasm. It carries out the reaction UMP + ATP = UDP + ADP. It participates in pyrimidine metabolism; CTP biosynthesis via de novo pathway; UDP from UMP (UMPK route): step 1/1. Inhibited by UTP. Its function is as follows. Catalyzes the reversible phosphorylation of UMP to UDP. The chain is Uridylate kinase from Burkholderia thailandensis (strain ATCC 700388 / DSM 13276 / CCUG 48851 / CIP 106301 / E264).